The primary structure comprises 165 residues: 6,7-dimethyl-8-ribityllumazine synthase (165 aa).

Residues phenylalanine 22, 56–58 (SME), and 80–82 (AVI) contribute to the 5-amino-6-(D-ribitylamino)uracil site. 85-86 (ET) is a binding site for (2S)-2-hydroxy-3-oxobutyl phosphate. The active-site Proton donor is histidine 88. Phenylalanine 113 is a binding site for 5-amino-6-(D-ribitylamino)uracil. Arginine 127 contributes to the (2S)-2-hydroxy-3-oxobutyl phosphate binding site.

The protein belongs to the DMRL synthase family.

The enzyme catalyses (2S)-2-hydroxy-3-oxobutyl phosphate + 5-amino-6-(D-ribitylamino)uracil = 6,7-dimethyl-8-(1-D-ribityl)lumazine + phosphate + 2 H2O + H(+). It functions in the pathway cofactor biosynthesis; riboflavin biosynthesis; riboflavin from 2-hydroxy-3-oxobutyl phosphate and 5-amino-6-(D-ribitylamino)uracil: step 1/2. Its function is as follows. Catalyzes the formation of 6,7-dimethyl-8-ribityllumazine by condensation of 5-amino-6-(D-ribitylamino)uracil with 3,4-dihydroxy-2-butanone 4-phosphate. This is the penultimate step in the biosynthesis of riboflavin. This Thermotoga petrophila (strain ATCC BAA-488 / DSM 13995 / JCM 10881 / RKU-1) protein is 6,7-dimethyl-8-ribityllumazine synthase.